The following is a 375-amino-acid chain: B3 domain-containing protein REM-like 2 (375 aa).

3 consecutive DNA-binding regions (TF-B3) follow at residues 51–147, 131–226, and 277–375; these read SFVA…KRLY, FVTV…YGTN, and RLVI…KSGK.

It is found in the nucleus. This is B3 domain-containing protein REM-like 2 from Arabidopsis thaliana (Mouse-ear cress).